Consider the following 165-residue polypeptide: Small ribosomal subunit protein uS5 (165 aa).

In terms of domain architecture, S5 DRBM spans 10 to 73 (LKEKVVSISR…EDAKKNLVEV (64 aa)).

This sequence belongs to the universal ribosomal protein uS5 family. In terms of assembly, part of the 30S ribosomal subunit. Contacts proteins S4 and S8.

Its function is as follows. With S4 and S12 plays an important role in translational accuracy. Located at the back of the 30S subunit body where it stabilizes the conformation of the head with respect to the body. The polypeptide is Small ribosomal subunit protein uS5 (Clostridium perfringens (strain ATCC 13124 / DSM 756 / JCM 1290 / NCIMB 6125 / NCTC 8237 / Type A)).